The following is a 156-amino-acid chain: Small ribosomal subunit protein uS7 (156 aa).

This sequence belongs to the universal ribosomal protein uS7 family. Part of the 30S ribosomal subunit. Contacts proteins S9 and S11.

Functionally, one of the primary rRNA binding proteins, it binds directly to 16S rRNA where it nucleates assembly of the head domain of the 30S subunit. Is located at the subunit interface close to the decoding center, probably blocks exit of the E-site tRNA. This Geotalea uraniireducens (strain Rf4) (Geobacter uraniireducens) protein is Small ribosomal subunit protein uS7.